Consider the following 171-residue polypeptide: Viral CASP8 and FADD-like apoptosis regulator (171 aa).

DED domains follow at residues methionine 1–glycine 74 and proline 92–valine 171.

Associates with the death-inducing signaling complex (DISC) formed by TNFRSF6, FADD and caspase-8. Interacts with FADD.

Inhibits TNFRSF1A, TNFRSF6, TNFRSF10 and TNFRSF12 induced apoptosis. May interfere with caspase-8 recruitment and activation at the death-inducing signaling complex (DISC). May lead to higher virus production and contribute to virus persistence and oncogenicity. The polypeptide is Viral CASP8 and FADD-like apoptosis regulator (Equus caballus (Horse)).